The following is a 666-amino-acid chain: MTPTPDAPAAADADAATGAGWLARRRGALARVALAPVAQAIGRVERVADGIAFVSGLEDTMLNEVLRFEGGVTGFAHTLDEDLISVVLLDPDAGVRAQTAVARTGAVLEVPAGPQLLGRVVDPLGRPLDGGAPLDAAHTLPIERAAPAIIERDLVSEPLDTGVLIVDALFTIGRGQRELIIGDRATGKTSLAIDAIVNQRHSDVICVYVAIGQRASAVRRVIDAVRRYGAPERCVFVVAPAACAPGLQWIAPFAGFSIAEYFRDRGQHALVVVDDLTKHAATHRELALLTREPPGREAYPGDIFYVHARLLERAAKLSAALGGGSLSALPIAETDAGNLAAYIPTNLISITDGQIVLDSALFAANQRPAVDVGLSVSRVGGKAQHPALRAASGRLRLDYAQFLELEAFTRFGGLTDARLRAQITRGERIRALITQPRFRALRTLDEVVLLKALAAGALDAMSPDLVAPLRERLPAWLDARIAALTPALAPPRDWLADDAALDALAESVGELIERIAADAARRATAGMPAEDAAGDIGGAFGGEQARGDADRDADHGANREVSREVSPEASREVSREVSCEVSHEADRDAAADAARVAGRAPGRAEPDRAAPRAMPDGPPRAQADGDRASASRPRPDARGDAARTAPSPQGGADANVDAEAEARHKR.

182–189 (GDRATGKT) serves as a coordination point for ATP. Positions 527-666 (MPAEDAAGDI…DAEAEARHKR (140 aa)) are disordered. Positions 545–590 (ARGDADRDADHGANREVSREVSPEASREVSREVSCEVSHEADRDAA) are enriched in basic and acidic residues. A compositionally biased stretch (low complexity) spans 591-601 (ADAARVAGRAP). The segment covering 623–641 (ADGDRASASRPRPDARGDA) has biased composition (basic and acidic residues).

The protein belongs to the ATPase alpha/beta chains family. In terms of assembly, F-type ATPases have 2 components, CF(1) - the catalytic core - and CF(0) - the membrane proton channel. CF(1) has five subunits: alpha(3), beta(3), gamma(1), delta(1), epsilon(1). CF(0) has three main subunits: a(1), b(2) and c(9-12). The alpha and beta chains form an alternating ring which encloses part of the gamma chain. CF(1) is attached to CF(0) by a central stalk formed by the gamma and epsilon chains, while a peripheral stalk is formed by the delta and b chains.

Its subcellular location is the cell inner membrane. It carries out the reaction ATP + H2O + 4 H(+)(in) = ADP + phosphate + 5 H(+)(out). Its function is as follows. Produces ATP from ADP in the presence of a proton gradient across the membrane. The alpha chain is a regulatory subunit. The chain is ATP synthase subunit alpha 2 from Burkholderia pseudomallei (strain 1106a).